Reading from the N-terminus, the 507-residue chain is MAEAHITLSPKVTHEQQTDIDSECEITEVDDENVNENKSQEMIQDIPARDREEIENITRTFVELQENYRLIEKIGEGTFSSVYKAEDLHYGRYINDWDIQSEVLKESSFGKEKIPVNEDSRKPKYVAIKKIYATSSPARIYNELEILYLLRGSSVIAPLITALRNEDQVLVVLPYYEHTDFRQYYSTFSYRDMSIYFRCLFQAMQQTQTLGIIHRDIKPSNFLFDVRTKHGVLVDFGLAERYDGRQQSHSCRCTNSNAAELAHDFSIAQETSLGYIKNDTRPSKRANRAGTRGFRAPEVLFKCSSQSPKVDIWSAGVILLSFLTKRFPMFNSKDDVDALMEIACIFGKSEMRQCAALHGCTFETNVSTLTEKRVNFRKLILWASCGSASIYKEKLRHKPSQEERLCLDFLEKCLELDCNKRISAEEALDHDFLYLDNLAYEKKDDDTAFDNSFGETSFEKDEDLTAKHLSHILDFKEQEETDEPTSLSKRKRSIDEILPNDALQDGA.

The residue at position 22 (Ser22) is a Phosphoserine. Residues 68–433 (YRLIEKIGEG…AEEALDHDFL (366 aa)) enclose the Protein kinase domain. Residues 74–82 (IGEGTFSSV) and Lys129 contribute to the ATP site. The active-site Proton acceptor is Asp216. Position 291 is a phosphothreonine (Thr291). The segment at 475–507 (FKEQEETDEPTSLSKRKRSIDEILPNDALQDGA) is disordered. Residue Ser493 is modified to Phosphoserine.

This sequence belongs to the protein kinase superfamily. Ser/Thr protein kinase family. CDC7 subfamily. Heterodimer with the regulatory subunit him1/dfp1. May form homooligomeric complexes. Interacts with mcm10. Post-translationally, autophosphorylated. Phosphorylated by cds1 in vitro.

The protein resides in the nucleus. It catalyses the reaction L-seryl-[protein] + ATP = O-phospho-L-seryl-[protein] + ADP + H(+). It carries out the reaction L-threonyl-[protein] + ATP = O-phospho-L-threonyl-[protein] + ADP + H(+). Phosphorylation of exogenous substrates activated by Dfp1. Functionally, required for G1/S transition. Plays a role in DNA replication checkpoint signaling through regulating rad3 and cds1. Involved in the maintenance of mitotic chromosome structures during S phase through regulating the function of rad21. Required for initiation of mitotic DNA replication through phosphorylating mcm2/cdc19. Required for genome integrity. The polypeptide is Cell cycle serine/threonine-protein kinase hsk1 (hsk1) (Schizosaccharomyces pombe (strain 972 / ATCC 24843) (Fission yeast)).